Here is a 930-residue protein sequence, read N- to C-terminus: Isoleucine--tRNA ligase (930 aa).

The short motif at 57–67 (PYANGHLHLGH) is the 'HIGH' region element. L-isoleucyl-5'-AMP is bound at residue E555. The 'KMSKS' region signature appears at 596-600 (KMSKS). K599 is a binding site for ATP. C896, C899, C916, and C919 together coordinate Zn(2+).

It belongs to the class-I aminoacyl-tRNA synthetase family. IleS type 1 subfamily. In terms of assembly, monomer. Requires Zn(2+) as cofactor.

It localises to the cytoplasm. The catalysed reaction is tRNA(Ile) + L-isoleucine + ATP = L-isoleucyl-tRNA(Ile) + AMP + diphosphate. Functionally, catalyzes the attachment of isoleucine to tRNA(Ile). As IleRS can inadvertently accommodate and process structurally similar amino acids such as valine, to avoid such errors it has two additional distinct tRNA(Ile)-dependent editing activities. One activity is designated as 'pretransfer' editing and involves the hydrolysis of activated Val-AMP. The other activity is designated 'posttransfer' editing and involves deacylation of mischarged Val-tRNA(Ile). The protein is Isoleucine--tRNA ligase of Moorella thermoacetica (strain ATCC 39073 / JCM 9320).